The chain runs to 112 residues: ATP synthase subunit c (112 aa).

Helical transmembrane passes span 36–56 and 81–101; these read FSVL…AIGM and MFIA…IALI.

It belongs to the ATPase C chain family. As to quaternary structure, F-type ATPases have 2 components, F(1) - the catalytic core - and F(0) - the membrane proton channel. F(1) has five subunits: alpha(3), beta(3), gamma(1), delta(1), epsilon(1). F(0) has three main subunits: a(1), b(2) and c(10-14). The alpha and beta chains form an alternating ring which encloses part of the gamma chain. F(1) is attached to F(0) by a central stalk formed by the gamma and epsilon chains, while a peripheral stalk is formed by the delta and b chains.

The protein resides in the cell inner membrane. Functionally, f(1)F(0) ATP synthase produces ATP from ADP in the presence of a proton or sodium gradient. F-type ATPases consist of two structural domains, F(1) containing the extramembraneous catalytic core and F(0) containing the membrane proton channel, linked together by a central stalk and a peripheral stalk. During catalysis, ATP synthesis in the catalytic domain of F(1) is coupled via a rotary mechanism of the central stalk subunits to proton translocation. Key component of the F(0) channel; it plays a direct role in translocation across the membrane. A homomeric c-ring of between 10-14 subunits forms the central stalk rotor element with the F(1) delta and epsilon subunits. The polypeptide is ATP synthase subunit c (Campylobacter jejuni (strain RM1221)).